A 662-amino-acid polypeptide reads, in one-letter code: MSLVPFSQLWRGVRTRGPVEQASSSSSSSSSSRRTWYAPARSQTGVQVAAYEPTAVLQLAPSAVSRRSTPVRSSIIADLSSSGSGDGEGERGDATGSRDEASSAFAGSSKVLKINIDLLLWRCRTSRIRARQTLDLNERKSLYKAAEDGLRRCLALDPADPRAYVVLGKTLVQQKRYDEARQLYQDGCANTGNVNPYIWSAWGWLEARTGNVERARKLYDAAVVVDGTHACAWHKWGMLEKGQGNFTRARDLWMQGIQRCRRKPQSQNAYLYNALGCMAAQLGRVGEARSWFEEGTRSAEGAASVALWQAWAVLEAKQGDPTVVRYLFRKALGANPRSRYVHLAWALWERRQGNPQHCLALLRRGCELNPTDPALYQAWALVEKQAGRIERARELFEQGLRADPSDLYMWQAYGVMEAEQGNMDRARQLFQEGVWADPRSPSTVYVFHAWGALEWQAGNVQTARELFKAAVRVDPKSETTWASWIAMESELGEIERVDELRIRQAERQWEFVVPAGFTTRPAPGLVDTLARFFSARGFGSDGNGSSSSNGGAGGQQAGSEAAAGIRAADSVDLTVDGGGQLRFKDVERLVESNDLSALPDFLSSDDDVEASLRPPGAAGRRQQQPAGSGTGGDNINGSAGYGKLQVPSLVPRPKATPLRSMG.

A chloroplast-targeting transit peptide spans 1 to 50; that stretch reads MSLVPFSQLWRGVRTRGPVEQASSSSSSSSSSRRTWYAPARSQTGVQVAA. 2 disordered regions span residues 14-38 and 75-101; these read RTRGPVEQASSSSSSSSSSRRTWYA and IIADLSSSGSGDGEGERGDATGSRDEA. Over residues 23–32 the composition is skewed to low complexity; the sequence is SSSSSSSSSS. The segment covering 88–101 has biased composition (basic and acidic residues); it reads EGERGDATGSRDEA. TPR repeat units lie at residues 126–160, 161–194, 196–229, 231–263, 269–302, 305–338, 339–372, 373–406, 408–440, and 444–477; these read SRIRARQTLDLNERKSLYKAAEDGLRRCLALDPAD, PRAYVVLGKTLVQQKRYDEARQLYQDGCANTGNV, PYIWSAWGWLEARTGNVERARKLYDAAVVVDGTH, CAWHKWGMLEKGQGNFTRARDLWMQGIQRCRRK, AYLYNALGCMAAQLGRVGEARSWFEEGTRSAEGA, VALWQAWAVLEAKQGDPTVVRYLFRKALGANPRS, RYVHLAWALWERRQGNPQHCLALLRRGCELNPTD, PALYQAWALVEKQAGRIERARELFEQGLRADPSD, YMWQAYGVMEAEQGNMDRARQLFQEGVWADPRS, and VYVFHAWGALEWQAGNVQTARELFKAAVRVDPKS. Disordered regions lie at residues 540-563 and 598-662; these read SDGNGSSSSNGGAGGQQAGSEAAA and LPDF…RSMG.

Part of a 300 kDa complex that associates with RNA.

It localises to the plastid. The protein resides in the chloroplast stroma. Its function is as follows. Involved, directly or indirectly, in the processing of the chloroplast encoded psbB mRNA to its mature form, acting via the 5'-UTR of the psbB mRNA. This Chlamydomonas reinhardtii (Chlamydomonas smithii) protein is PsbB mRNA maturation factor Mbb1, chloroplastic (MBB1).